Reading from the N-terminus, the 566-residue chain is Beta,beta-carotene 15,15'-dioxygenase (566 aa).

Residues histidine 172, histidine 237, histidine 308, and histidine 514 each contribute to the Fe cation site. The interval 529–566 (TPAKTQEDENSDHPTGLTAPGLGHGENDFTAGHGGKSL) is disordered.

It belongs to the carotenoid oxygenase family. It depends on Fe(2+) as a cofactor.

The protein resides in the cytoplasm. It is found in the cytosol. It carries out the reaction all-trans-beta-carotene + O2 = 2 all-trans-retinal. The protein operates within cofactor metabolism; retinol metabolism. Symmetrically cleaves beta-carotene into two molecules of retinal using a dioxygenase mechanism. The sequence is that of Beta,beta-carotene 15,15'-dioxygenase from Rattus norvegicus (Rat).